The primary structure comprises 205 residues: Protein phosphatase inhibitor 2 (205 aa).

Residues 1-44 (MAASTASHRPIKGILKNKTSTTSSMVASAEQPRGNVDEELSKKS) are disordered. Alanine 2 carries the post-translational modification N-acetylalanine. Required for binding PPP1CC stretches follow at residues 12-17 (KGILKN) and 43-55 (KSQK…ILAT). The span at 17 to 26 (NKTSTTSSMV) shows a compositional bias: polar residues. Over residues 35–44 (NVDEELSKKS) the composition is skewed to basic and acidic residues. Serine 44 carries the phosphoserine; by ATM modification. Phosphothreonine; by GSK3 is present on threonine 73. Serine 87 carries the phosphoserine modification. Phosphothreonine occurs at positions 89 and 92. The tract at residues 111 to 142 (EPKYRIQEQESSGEEDSDLSPEEREKKRQFEM) is disordered. A phosphoserine mark is found at serine 121, serine 122, serine 127, and serine 130. Acidic residues predominate over residues 121 to 130 (SSGEEDSDLS). Basic and acidic residues predominate over residues 131–142 (PEEREKKRQFEM). The tract at residues 147–150 (HYNE) is required for binding PPP1CC catalytic center, displacing metal ions and inhibition of PPP1CC catalytic activity. The tract at residues 163–205 (KDLHDDDEDEEMLETADGESMNTEESNQGSTPSDQQQNKLRSS) is disordered. Residues 167 to 179 (DDDEDEEMLETAD) are compositionally biased toward acidic residues. Residues 182-205 (SMNTEESNQGSTPSDQQQNKLRSS) show a composition bias toward polar residues.

It belongs to the protein phosphatase inhibitor 2 family. Heterodimer with PP1. Phosphorylation on Thr-73 by GSK3 activates PP1 by dissociating the PP1-PPP1R2 complex. Phosphorylation on Ser-44 by ATM activates PP1 by dissociating the PP1-PPP1R2 complex.

Its function is as follows. Inhibitor of protein-phosphatase 1. The sequence is that of Protein phosphatase inhibitor 2 (PPP1R2) from Homo sapiens (Human).